Here is a 143-residue protein sequence, read N- to C-terminus: Transcriptional regulator SlyA (143 aa).

The 134-residue stretch at 2 to 135 (ESTLGSDLAR…LSGLIDKLEK (134 aa)) folds into the HTH marR-type domain. A DNA-binding region (H-T-H motif) is located at residues 49 to 72 (QIQLAKAIGIEQPSLVRTLDQLEE).

The protein belongs to the SlyA family. In terms of assembly, homodimer.

Its function is as follows. Transcription regulator that can specifically activate or repress expression of target genes. The polypeptide is Transcriptional regulator SlyA (Yersinia pestis (strain Pestoides F)).